The following is a 75-amino-acid chain: Small ribosomal subunit protein bS21B (75 aa).

Over residues 33 to 52 the composition is skewed to basic and acidic residues; the sequence is RRSYEKPSERRAREKAEAVR. Positions 33-75 are disordered; the sequence is RRSYEKPSERRAREKAEAVRRARKLARKQAQREGLLPGKKRAA.

It belongs to the bacterial ribosomal protein bS21 family.

The sequence is that of Small ribosomal subunit protein bS21B from Chelativorans sp. (strain BNC1).